An 860-amino-acid chain; its full sequence is Putative mixed-linked glucan synthase 1 (860 aa).

The next 2 membrane-spanning stretches (helical) occupy residues isoleucine 63–alanine 83 and glycine 93–leucine 113. Aspartate 183 is an active-site residue. A coiled-coil region spans residues glutamate 235–glutamine 263. Substrate contacts are provided by aspartate 381 and aspartate 383. Aspartate 549 is an active-site residue. 6 consecutive transmembrane segments (helical) span residues threonine 625–isoleucine 645, phenylalanine 655–phenylalanine 675, phenylalanine 693–leucine 713, leucine 747–glycine 767, leucine 781–leucine 801, and alanine 812–phenylalanine 832.

This sequence belongs to the glycosyltransferase 2 family. Plant cellulose synthase-like F subfamily.

The protein localises to the golgi apparatus membrane. Functionally, may catalyze both beta-1,3 and beta-1,4 glycosidic linkage on beta-D-glucan. Essential for (1,3;1,4)-beta-D-glucans synthesis in grasses and cereals (Poaceae). The mixed-linked glucans (which are not present in walls of dicotyledons or most other monocotyledonous plants) are particularly important constituents of the walls of the starchy endosperm and aleurone cells of cereal grains such as oats, wheat, rice and barley. They can account for up to 70% by weight of the wall. The sequence is that of Putative mixed-linked glucan synthase 1 (CSFL1) from Oryza sativa subsp. japonica (Rice).